Consider the following 250-residue polypeptide: Methylthioribulose-1-phosphate dehydratase (250 aa).

Zn(2+) contacts are provided by histidine 103 and histidine 105.

This sequence belongs to the aldolase class II family. MtnB subfamily. Zn(2+) is required as a cofactor.

The catalysed reaction is 5-(methylsulfanyl)-D-ribulose 1-phosphate = 5-methylsulfanyl-2,3-dioxopentyl phosphate + H2O. It functions in the pathway amino-acid biosynthesis; L-methionine biosynthesis via salvage pathway; L-methionine from S-methyl-5-thio-alpha-D-ribose 1-phosphate: step 2/6. Its function is as follows. Catalyzes the dehydration of methylthioribulose-1-phosphate (MTRu-1-P) into 2,3-diketo-5-methylthiopentyl-1-phosphate (DK-MTP-1-P). This Leptospira borgpetersenii serovar Hardjo-bovis (strain JB197) protein is Methylthioribulose-1-phosphate dehydratase.